Reading from the N-terminus, the 950-residue chain is uncharacterized protein (950 aa).

This is an uncharacterized protein from Rickettsia prowazekii (strain Madrid E).